The primary structure comprises 65 residues: DNA gyrase inhibitor YacG (65 aa).

Zn(2+)-binding residues include cysteine 9, cysteine 12, cysteine 28, and cysteine 32. Positions 44 to 65 are disordered; that stretch reads EKRIPSSSDLSESDDWSEEPKQ. Residues 54 to 65 are compositionally biased toward acidic residues; it reads SESDDWSEEPKQ.

The protein belongs to the DNA gyrase inhibitor YacG family. Interacts with GyrB. Requires Zn(2+) as cofactor.

Functionally, inhibits all the catalytic activities of DNA gyrase by preventing its interaction with DNA. Acts by binding directly to the C-terminal domain of GyrB, which probably disrupts DNA binding by the gyrase. The protein is DNA gyrase inhibitor YacG of Escherichia coli O6:H1 (strain CFT073 / ATCC 700928 / UPEC).